Reading from the N-terminus, the 178-residue chain is Inorganic pyrophosphatase (178 aa).

Substrate-binding residues include Lys-30, Arg-44, and Tyr-56. Mg(2+)-binding residues include Asp-66, Asp-71, and Asp-103. Tyr-142 contributes to the substrate binding site.

Belongs to the PPase family. Homohexamer. Mg(2+) serves as cofactor.

It is found in the cytoplasm. The catalysed reaction is diphosphate + H2O = 2 phosphate + H(+). In terms of biological role, catalyzes the hydrolysis of inorganic pyrophosphate (PPi) forming two phosphate ions. The chain is Inorganic pyrophosphatase from Xanthomonas campestris pv. campestris (strain ATCC 33913 / DSM 3586 / NCPPB 528 / LMG 568 / P 25).